An 830-amino-acid chain; its full sequence is Phenylalanine--tRNA ligase beta subunit (830 aa).

In terms of domain architecture, tRNA-binding spans 39–158 (GQSLDGVVVG…DDTPVGTPFP (120 aa)). The B5 domain maps to 417–492 (PAEKTIALRP…RLHGYDQIPE (76 aa)). The Mg(2+) site is built by D470, D476, E479, and E480. Positions 490 to 510 (IPEPERVPVPSRTPEQPPEET) are disordered. The FDX-ACB domain occupies 736-828 (SRFPVVDRDL…LAENHGARLR (93 aa)).

The protein belongs to the phenylalanyl-tRNA synthetase beta subunit family. Type 1 subfamily. In terms of assembly, tetramer of two alpha and two beta subunits. Mg(2+) is required as a cofactor.

The protein resides in the cytoplasm. It catalyses the reaction tRNA(Phe) + L-phenylalanine + ATP = L-phenylalanyl-tRNA(Phe) + AMP + diphosphate + H(+). The protein is Phenylalanine--tRNA ligase beta subunit of Salinibacter ruber (strain DSM 13855 / M31).